The primary structure comprises 293 residues: Energy-coupling factor transporter ATP-binding protein EcfA2 (293 aa).

The ABC transporter domain maps to I3–D246. G40 to S47 contributes to the ATP binding site.

It belongs to the ABC transporter superfamily. Energy-coupling factor EcfA family. In terms of assembly, forms a stable energy-coupling factor (ECF) transporter complex composed of 2 membrane-embedded substrate-binding proteins (S component), 2 ATP-binding proteins (A component) and 2 transmembrane proteins (T component).

It is found in the cell membrane. ATP-binding (A) component of a common energy-coupling factor (ECF) ABC-transporter complex. Unlike classic ABC transporters this ECF transporter provides the energy necessary to transport a number of different substrates. The protein is Energy-coupling factor transporter ATP-binding protein EcfA2 of Bacillus thuringiensis (strain Al Hakam).